The chain runs to 152 residues: Ribonuclease H (152 aa).

The region spanning 1–142 is the RNase H type-1 domain; it reads MGSKVVIYTD…ADKLAVQGRE (142 aa). Residues D10, E48, D70, and D134 each coordinate Mg(2+).

The protein belongs to the RNase H family. As to quaternary structure, monomer. Requires Mg(2+) as cofactor.

It localises to the cytoplasm. The enzyme catalyses Endonucleolytic cleavage to 5'-phosphomonoester.. In terms of biological role, endonuclease that specifically degrades the RNA of RNA-DNA hybrids. The chain is Ribonuclease H from Rickettsia massiliae (strain Mtu5).